We begin with the raw amino-acid sequence, 459 residues long: uncharacterized protein (459 aa).

Residues 13 to 145 enclose the B12-binding domain; it reads TESAIKRVVG…DALSKGRELK (133 aa). Positions 188–402 constitute a Radical SAM core domain; the sequence is ADGVPFGVVM…MNWRKYTTID (215 aa). [4Fe-4S] cluster-binding residues include C202, C206, and C209.

The protein belongs to the methyltransferase superfamily. [4Fe-4S] cluster serves as cofactor.

This is an uncharacterized protein from Pyrococcus horikoshii (strain ATCC 700860 / DSM 12428 / JCM 9974 / NBRC 100139 / OT-3).